The primary structure comprises 252 residues: HTH-type transcriptional regulator XynR (252 aa).

Residues 4-66 (IQSVERALQI…PENGKYRLGM (63 aa)) form the HTH iclR-type domain. Positions 25 to 45 (KITDISKLMGLSKSTLHSLLK) form a DNA-binding region, H-T-H motif. An IclR-ED domain is found at 81–250 (IRQKAKGWLT…GLALSRALGY (170 aa)).

With respect to regulation, activity may be controlled by xylonate. Functionally, involved in regulation of xylonate catabolism. Represses the expression of both yagA and yagEF operons. Binds mainly at a single site within the spacer of the bidirectional transcription units yagA and yagEF. The polypeptide is HTH-type transcriptional regulator XynR (Escherichia coli (strain K12)).